We begin with the raw amino-acid sequence, 282 residues long: tRNA (guanine-N(1)-)-methyltransferase (282 aa).

S-adenosyl-L-methionine is bound by residues Gly-157 and 177-182 (VGDYIL).

It belongs to the RNA methyltransferase TrmD family. In terms of assembly, homodimer.

Its subcellular location is the cytoplasm. The catalysed reaction is guanosine(37) in tRNA + S-adenosyl-L-methionine = N(1)-methylguanosine(37) in tRNA + S-adenosyl-L-homocysteine + H(+). Functionally, specifically methylates guanosine-37 in various tRNAs. This Rickettsia bellii (strain RML369-C) protein is tRNA (guanine-N(1)-)-methyltransferase.